Reading from the N-terminus, the 384-residue chain is Alanine racemase (384 aa).

Catalysis depends on Lys42, which acts as the Proton acceptor; specific for D-alanine. Lys42 carries the post-translational modification N6-(pyridoxal phosphate)lysine. Arg140 contacts substrate. The active-site Proton acceptor; specific for L-alanine is Tyr271. Met319 serves as a coordination point for substrate.

The protein belongs to the alanine racemase family. As to quaternary structure, homodimer. The cofactor is pyridoxal 5'-phosphate.

It carries out the reaction L-alanine = D-alanine. The protein operates within amino-acid biosynthesis; D-alanine biosynthesis; D-alanine from L-alanine: step 1/1. Catalyzes the interconversion of L-alanine and D-alanine. In Mycobacterium tuberculosis (strain CDC 1551 / Oshkosh), this protein is Alanine racemase (alr).